Reading from the N-terminus, the 286-residue chain is Aquaporin PIP1-1 (286 aa).

The tract at residues 1–34 is disordered; sequence MEGKEEDVRLGANKFSERQPIGTAAQSDKGYKEP. At 1–54 the chain is on the cytoplasmic side; that stretch reads MEGKEEDVRLGANKFSERQPIGTAAQSDKGYKEPPPAPLFEPGELTSWSFYRAG. A helical transmembrane segment spans residues 55–75; it reads IAEFMATFLFLYITILTVMGV. Topologically, residues 76 to 88 are extracellular; it reads VKSNSKCSTVGIQ. A helical transmembrane segment spans residues 89 to 109; it reads GIAWAFGGMIFALVYCTAGIS. Residues 110 to 131 are Cytoplasmic-facing; that stretch reads GGHINPAVTFGLFLARKLSLTR. Positions 114-116 match the NPA 1 motif; the sequence is NPA. A helical transmembrane segment spans residues 132 to 152; it reads ALFYMVMQCLGAICGAGVVKG. At 153–174 the chain is on the extracellular side; it reads YQKGLYESNGGGANVVAPGYTK. Residues 175–195 form a helical membrane-spanning segment; that stretch reads GDGLGAEIVGTFILVYTVFSA. Residues 196 to 208 lie on the Cytoplasmic side of the membrane; it reads TDAKRNARDSHVP. Residues 209 to 229 traverse the membrane as a helical segment; it reads ILAPLPIGFAVFLVHLATIPI. At 230 to 256 the chain is on the extracellular side; it reads TGTGINPARSLGAAIIYNKKHAWDDHW. Residues 235–237 carry the NPA 2 motif; sequence NPA. A helical membrane pass occupies residues 257 to 277; sequence IFWVGPFIGAALAAIYHQIVI. Over 278–286 the chain is Cytoplasmic; it reads RAIPFKSRP.

The protein belongs to the MIP/aquaporin (TC 1.A.8) family. PIP (TC 1.A.8.11) subfamily. Expressed in leaves, roots, stems, flowers and fruits, with highest levels in roots.

It localises to the cell membrane. Its function is as follows. Water channel required to facilitate the transport of water across cell membrane; mercury-insensitive. Promotes primary root elongation and root hair formation. Contributes to the tolerance to multiple abiotic stresses including salt (NaCl), cold and water deprivation, by modulating cytosolic K(+)/Na(+) ratio, maintaining osmotic balance, and reducing membrane injury (e.g. oxidative injury). Also regulates the expression of abscisic acid (ABA)-responsive genes during dehydration and salt stresses. The protein is Aquaporin PIP1-1 of Musa acuminata (Banana).